Here is a 38-residue protein sequence, read N- to C-terminus: ECIGHRRSCKEDRNGCCKLYTCNCWYPTPDDQWCKCLL.

Intrachain disulfides connect Cys2/Cys17, Cys9/Cys22, Cys16/Cys36, and Cys24/Cys34.

Expressed by the venom gland.

The protein resides in the secreted. This chain is U9-ctenitoxin-Pk1a, found in Phoneutria keyserlingi (Brazilian wandering spider).